Reading from the N-terminus, the 302-residue chain is HTH-type transcriptional regulator AlsR (302 aa).

The HTH lysR-type domain occupies 1 to 58 (MELRHLQYFIAVAEELHFGKAARRLNMTQPPLSQQIKQLEEEVGVTLLKRTKRFVELT). The segment at residues 18-37 (FGKAARRLNMTQPPLSQQIK) is a DNA-binding region (H-T-H motif).

Belongs to the LysR transcriptional regulatory family.

Its function is as follows. Regulates the expression of the alsSD operon for acetoin biosynthesis. The protein is HTH-type transcriptional regulator AlsR (alsR) of Bacillus subtilis (strain 168).